The chain runs to 120 residues: Large ribosomal subunit protein bL17 (120 aa).

Belongs to the bacterial ribosomal protein bL17 family. In terms of assembly, part of the 50S ribosomal subunit. Contacts protein L32.

The protein is Large ribosomal subunit protein bL17 of Geobacillus thermodenitrificans (strain NG80-2).